Reading from the N-terminus, the 41-residue chain is Large ribosomal subunit protein bL36 (41 aa).

This sequence belongs to the bacterial ribosomal protein bL36 family.

The chain is Large ribosomal subunit protein bL36 from Rhizobium etli (strain CIAT 652).